Here is a 264-residue protein sequence, read N- to C-terminus: MHKLKLHGFNNLTKSLSFCIYDICYAKSQADRDSYIAYIDEQYNANRLTEILSETCSIIGANILNIARQDYDPQGASVTILVSEEPMDPKDVDNTENPGPLPDSVVAHLDKSHICVHTYPESHPGGGICTFRADIEVSTCGVISPLKALNYLIHKLESDIVTMDYRVRGFTRDVNGMKHYIDHEISSIQNYMTEEVQSQYYMMDVNIYQENLFHTKMMLKRFDLNDYLFNATPEQLSEAEKQEITHLLKKEIQEIYYGRNLPTV.

The active-site Schiff-base intermediate with substrate; via pyruvic acid is serine 112. Residue serine 112 is modified to Pyruvic acid (Ser); by autocatalysis. Histidine 117 acts as the Proton acceptor; for processing activity in catalysis. Cysteine 140 acts as the Proton donor; for catalytic activity in catalysis.

Belongs to the prokaryotic AdoMetDC family. Type 2 subfamily. Heterooctamer of four alpha and four beta chains arranged as a tetramer of alpha/beta heterodimers. Pyruvate is required as a cofactor. Post-translationally, is synthesized initially as an inactive proenzyme. Formation of the active enzyme involves a self-maturation process in which the active site pyruvoyl group is generated from an internal serine residue via an autocatalytic post-translational modification. Two non-identical subunits are generated from the proenzyme in this reaction, and the pyruvate is formed at the N-terminus of the alpha chain, which is derived from the carboxyl end of the proenzyme. The post-translation cleavage follows an unusual pathway, termed non-hydrolytic serinolysis, in which the side chain hydroxyl group of the serine supplies its oxygen atom to form the C-terminus of the beta chain, while the remainder of the serine residue undergoes an oxidative deamination to produce ammonia and the pyruvoyl group blocking the N-terminus of the alpha chain.

The enzyme catalyses S-adenosyl-L-methionine + H(+) = S-adenosyl 3-(methylsulfanyl)propylamine + CO2. It functions in the pathway amine and polyamine biosynthesis; S-adenosylmethioninamine biosynthesis; S-adenosylmethioninamine from S-adenosyl-L-methionine: step 1/1. Catalyzes the decarboxylation of S-adenosylmethionine to S-adenosylmethioninamine (dcAdoMet), the propylamine donor required for the synthesis of the polyamines spermine and spermidine from the diamine putrescine. This is S-adenosylmethionine decarboxylase proenzyme from Photorhabdus laumondii subsp. laumondii (strain DSM 15139 / CIP 105565 / TT01) (Photorhabdus luminescens subsp. laumondii).